The chain runs to 858 residues: Zinc finger protein ZXDC (858 aa).

Disordered regions lie at residues 1–127 and 151–174; these read MDLP…APAG and PGPA…STPG. Composition is skewed to low complexity over residues 23-35, 84-97, and 151-171; these read PLRR…GASP, GGAA…QEAE, and PGPA…SGPS. Residue S34 is modified to Phosphoserine. Phosphothreonine is present on T172. C2H2-type zinc fingers lie at residues 175–199, 208–232, 238–262, 268–290, 297–321, 328–352, 358–382, 388–412, 418–442, and 451–476; these read YRCP…LLTH, FKCP…LQSH, FGCP…MKGH, FKCE…QRSH, YKCD…NRAH, FSCS…LRSH, FICD…RRKH, FTCP…SITH, FECP…SKKH, and SRCP…VRQH. The tract at residues 579–688 is required for transcriptional activation; it reads DSPLVLGTAA…HGLPQSTLPS (110 aa). Residue K660 forms a Glycyl lysine isopeptide (Lys-Gly) (interchain with G-Cter in SUMO) linkage. Disordered regions lie at residues 660 to 696, 726 to 756, and 837 to 858; these read KVEP…HGAQ, KEKK…SPPH, and GGPA…QDLQ. S665 bears the Phosphoserine mark. A compositionally biased stretch (polar residues) spans 675–687; that stretch reads QEGSHGLPQSTLP. Residues 781 to 858 form an interaction with CIITA region; that stretch reads PAAGVQCGAQ…GSTINLQDLQ (78 aa). A compositionally biased stretch (polar residues) spans 847-858; it reads FPGSTINLQDLQ.

This sequence belongs to the ZXD family. As to quaternary structure, self-associates. Interacts with ZXDA and CIITA. Post-translationally, sumoylated at Lys-660 with SUMO1, SUMO2 and SUMO3; sumoylation enhances the activity of the transcriptional activation domain. As to expression, expressed at high levels in heart, kidney, liver and testis, at moderate levels in brain and stomach, and at low levels in lung, muscle, placenta, small intestine and spleen.

The protein resides in the nucleus. In terms of biological role, cooperates with CIITA to promote transcription of MHC class I and MHC class II genes. This chain is Zinc finger protein ZXDC (ZXDC), found in Homo sapiens (Human).